Here is an 870-residue protein sequence, read N- to C-terminus: Disks large homolog 2 (870 aa).

2 S-palmitoyl cysteine lipidation sites follow: Cys5 and Cys7. Ser28 is modified (phosphoserine). Phosphotyrosine is present on Tyr58. A Phosphoserine modification is found at Ser65. PDZ domains are found at residues 98 to 184 and 193 to 279; these read EITL…VRRR and EIKL…VGKP. A phosphoserine mark is found at Ser307, Ser328, Ser360, Ser365, Ser406, and Ser414. Residues 421 to 501 enclose the PDZ 3 domain; that stretch reads KVVLHKGSTG…QTVTIIAQYQ (81 aa). The residue at position 505 (Tyr505) is a Phosphotyrosine. Phosphoserine is present on residues Ser528, Ser530, Ser553, Ser627, and Ser635. One can recognise an SH3 domain in the interval 536–606; that stretch reads KRSLYVRAMF…PSKRRVERKE (71 aa). In terms of domain architecture, Guanylate kinase-like spans 680–855; that stretch reads TRPVIILGPM…IYNQCKLVIE (176 aa). Residues Tyr750 and Tyr755 each carry the phosphotyrosine modification.

Belongs to the MAGUK family. Interacts through its PDZ domains with NETO1. Interacts with NOS1/nNOS through second PDZ domain. Interacts with KCNJ2/Kir2.1 (via C-terminus) through one of its PDZ domains. Interacts with KCNJ4, Interacts with FRMPD4 (via C-terminus). Interacts with LRFN1, LRFN2 and LRFN4. Interacts with FASLG. Interacts with KCNJ4. Interacts with ADAM22. Interacts with DGKI (via PDZ-binding motif). Post-translationally, palmitoylation of isoform 1 is not required for targeting to postsynaptic density.

The protein localises to the cell membrane. Its subcellular location is the postsynaptic density. It localises to the synapse. It is found in the membrane. The protein resides in the cell projection. The protein localises to the axon. Its subcellular location is the perikaryon. In terms of biological role, required for perception of chronic pain through NMDA receptor signaling. Regulates surface expression of NMDA receptors in dorsal horn neurons of the spinal cord. Interacts with the cytoplasmic tail of NMDA receptor subunits as well as inward rectifying potassium channels. Involved in regulation of synaptic stability at cholinergic synapses. Part of the postsynaptic protein scaffold of excitatory synapses. The sequence is that of Disks large homolog 2 (DLG2) from Homo sapiens (Human).